A 386-amino-acid chain; its full sequence is L-lactate dehydrogenase (386 aa).

Positions 1–380 (MIISAASDYR…SGDALSRVTR (380 aa)) constitute an FMN hydroxy acid dehydrogenase domain. A substrate-binding site is contributed by Y24. Positions 106 and 127 each coordinate FMN. Y129 provides a ligand contact to substrate. T155 contacts FMN. Residue R164 coordinates substrate. Position 251 (K251) interacts with FMN. H275 functions as the Proton acceptor in the catalytic mechanism. R278 is a binding site for substrate. 306–330 (DSGIRSGLDVVRMLALGADAVLLGR) contributes to the FMN binding site.

The protein belongs to the FMN-dependent alpha-hydroxy acid dehydrogenase family. The cofactor is FMN.

The protein resides in the cell inner membrane. It carries out the reaction (S)-lactate + A = pyruvate + AH2. Its function is as follows. Catalyzes the conversion of L-lactate to pyruvate. Is coupled to the respiratory chain. This is L-lactate dehydrogenase from Xanthomonas campestris pv. campestris (strain 8004).